A 606-amino-acid polypeptide reads, in one-letter code: MVAVAAFSSSGQDKPAHTPKLGLFVYILAAASVIGGFLFGYDTSVVSAAMLYMPDAPGLKPMDTVWQEVLVSISPGMAAVGSLMSGTSSDYIGRRKVILGASAIFTIGALVCAASVNKIMLLVGRVLLGIAIGFASMIVPVYLGETAPTHVRGMLVAAFALMISFGQVVANITGGAFSYIDPYNVGWRLMFAFAAVPSIIQFVCFMFLPETPRWLYENGFETETREVLEKVYNGDKEWVEYEMAEIIAFNEDQAKENEKAHASGPVIWRILKTPHVLKACFIGSMLQAFQQLAGINTILYYTADIIRSSGISNNHTTIWISVLLSLCNFIGPFVPMSLIEKVGRRIIFLFSCGLVVLSLVFIGVAFLLVNHDSAATLPANQYGSNFNSSYPDAKGCMAYSNCDYCVTTDACGFCHDANTKQGYCLPAGFDNPEVYSSTGSCTNSNGSIANNFKWEKYYCDTKYTLLPIIACGVYLLTFSSGFTSLPWVLNSEFYPMWARSTCVAISTTSNWVFNLIIALTYLSLTQVIGKYGAFWLYAGLTVIAFIFILFLVPETKGYSIEEVEMLFMNKKQRREAESRRRETVTEVRSRMNSTVSFGQHNEVHKY.

Over 1-20 the chain is Cytoplasmic; it reads MVAVAAFSSSGQDKPAHTPK. Residues 21–41 form a helical membrane-spanning segment; that stretch reads LGLFVYILAAASVIGGFLFGY. The Extracellular portion of the chain corresponds to 42 to 63; the sequence is DTSVVSAAMLYMPDAPGLKPMD. Residues 64 to 84 traverse the membrane as a helical segment; that stretch reads TVWQEVLVSISPGMAAVGSLM. At 85–96 the chain is on the cytoplasmic side; sequence SGTSSDYIGRRK. A helical membrane pass occupies residues 97–117; it reads VILGASAIFTIGALVCAASVN. K118 is a topological domain (extracellular). The helical transmembrane segment at 119–139 threads the bilayer; sequence IMLLVGRVLLGIAIGFASMIV. The Cytoplasmic portion of the chain corresponds to 140 to 152; it reads PVYLGETAPTHVR. A helical membrane pass occupies residues 153–173; sequence GMLVAAFALMISFGQVVANIT. Topologically, residues 174–188 are extracellular; that stretch reads GGAFSYIDPYNVGWR. Residues 189–209 form a helical membrane-spanning segment; the sequence is LMFAFAAVPSIIQFVCFMFLP. The Cytoplasmic portion of the chain corresponds to 210–278; that stretch reads ETPRWLYENG…RILKTPHVLK (69 aa). A helical membrane pass occupies residues 279 to 299; that stretch reads ACFIGSMLQAFQQLAGINTIL. Residues 300-317 lie on the Extracellular side of the membrane; that stretch reads YYTADIIRSSGISNNHTT. N-linked (GlcNAc...) asparagine glycosylation occurs at N314. The chain crosses the membrane as a helical span at residues 318–338; sequence IWISVLLSLCNFIGPFVPMSL. Over 339 to 345 the chain is Cytoplasmic; sequence IEKVGRR. A helical transmembrane segment spans residues 346–366; sequence IIFLFSCGLVVLSLVFIGVAF. The Extracellular portion of the chain corresponds to 367–464; it reads LLVNHDSAAT…EKYYCDTKYT (98 aa). N-linked (GlcNAc...) asparagine glycosylation is found at N387 and N445. A helical transmembrane segment spans residues 465–485; the sequence is LLPIIACGVYLLTFSSGFTSL. Over 486 to 501 the chain is Cytoplasmic; sequence PWVLNSEFYPMWARST. Residues 502–522 form a helical membrane-spanning segment; that stretch reads CVAISTTSNWVFNLIIALTYL. Residues 523–531 are Extracellular-facing; that stretch reads SLTQVIGKY. The helical transmembrane segment at 532–552 threads the bilayer; sequence GAFWLYAGLTVIAFIFILFLV. Residues 553 to 606 are Cytoplasmic-facing; the sequence is PETKGYSIEEVEMLFMNKKQRREAESRRRETVTEVRSRMNSTVSFGQHNEVHKY.

It belongs to the major facilitator superfamily. Sugar transporter (TC 2.A.1.1) family. As to expression, expressed in the intestine.

It is found in the cell membrane. It catalyses the reaction myo-inositol(out) + H(+)(out) = myo-inositol(in) + H(+)(in). Functionally, h(+)-myo-inositol cotransporter. Probably by promoting the transport of myo-inositol regulates intracellular osmosis in response to hyperosmotic stress. The polypeptide is Proton myo-inositol cotransporter hmit-1.1 (Caenorhabditis elegans).